Consider the following 558-residue polypeptide: Asparagine--tRNA ligase, cytoplasmic (558 aa).

Residue Ser-71 is modified to Phosphoserine. Residues 79–101 (MWHREQMKSESREKKEAEDSLRR) form a disordered region. Residues 81–101 (HREQMKSESREKKEAEDSLRR) show a composition bias toward basic and acidic residues. An N6-acetyllysine mark is found at Lys-254 and Lys-500.

It belongs to the class-II aminoacyl-tRNA synthetase family. As to quaternary structure, homodimer.

Its subcellular location is the cytoplasm. It catalyses the reaction tRNA(Asn) + L-asparagine + ATP = L-asparaginyl-tRNA(Asn) + AMP + diphosphate + H(+). Catalyzes the attachment of asparagine to tRNA(Asn) in a two-step reaction: asparagine is first activated by ATP to form Asn-AMP and then transferred to the acceptor end of tRNA(Asn). In addition to its essential role in protein synthesis, acts as a signaling molecule that induced migration of CCR3-expressing cells. Has an essential role in the development of the cerebral cortex, being required for proper proliferation of radial glial cells. This is Asparagine--tRNA ligase, cytoplasmic from Macaca fascicularis (Crab-eating macaque).